The chain runs to 145 residues: Small ribosomal subunit protein uS19 (145 aa).

Ala-2 is subject to N-acetylalanine. A Glycyl lysine isopeptide (Lys-Gly) (interchain with G-Cter in SUMO2) cross-link involves residue Lys-108.

This sequence belongs to the universal ribosomal protein uS19 family. In terms of assembly, component of the small ribosomal subunit.

It is found in the cytoplasm. Functionally, component of the small ribosomal subunit. The ribosome is a large ribonucleoprotein complex responsible for the synthesis of proteins in the cell. This Mesocricetus auratus (Golden hamster) protein is Small ribosomal subunit protein uS19 (RPS15).